We begin with the raw amino-acid sequence, 316 residues long: Ribosomal RNA small subunit methyltransferase H (316 aa).

Residues 32 to 34 (AGH), Asp52, Phe79, Asp106, and Gln113 each bind S-adenosyl-L-methionine.

It belongs to the methyltransferase superfamily. RsmH family.

It is found in the cytoplasm. It catalyses the reaction cytidine(1402) in 16S rRNA + S-adenosyl-L-methionine = N(4)-methylcytidine(1402) in 16S rRNA + S-adenosyl-L-homocysteine + H(+). Functionally, specifically methylates the N4 position of cytidine in position 1402 (C1402) of 16S rRNA. The protein is Ribosomal RNA small subunit methyltransferase H of Paenibacillus sp. (strain JDR-2).